The chain runs to 686 residues: Endonuclease GajA (686 aa).

Residues 1–423 (MYLKSLKIYN…NYVTTKNNYT (423 aa)) form an ATPase domain region. 52-56 (NCGKT) lines the ATP pocket. Residues 463 to 599 (FFSDAIIFVE…TSFEEAFILT (137 aa)) form a toprim domain region. Residues glutamate 472, glutamate 476, aspartate 559, and glutamate 604 each contribute to the a divalent metal cation site.

As to quaternary structure, homotetramer. Forms the core of the anti-phage defense complex. Interacts with GajB; 2 GajB dimers dock at opposite sides of the GajA complex to form a 4:4 GajA-GajB assembly (GajAB). GajAB interacts with Bacillus phage Phi3T Gad1 protein; this interaction forms a 4:4:8 GajAB-Gad1 complex and leads to GajAB inhibition. Requires Mg(2+) as cofactor.

Its function is as follows. Component of antiviral defense system Gabija type II, composed of GajA and GajB. Probably a nicking endonuclease that is strongly inhibited by physiological levels of nucleotides (NTP and dNTP). Expression of Gabija type II in B.subtilis (strain BEST7003) confers resistance to phages phi105, and SpBeta. During viral replication, when nucleotides are rapidly consumed, it is de-suppressed and degrades target DNA. The protein is Endonuclease GajA of Bacillus cereus (strain HuB5-5).